We begin with the raw amino-acid sequence, 334 residues long: Malate dehydrogenase 2 (334 aa).

12 to 18 contacts NAD(+); sequence GAAGRVA. The substrate site is built by Arg93 and Arg99. Residues Asn106, Gln113, and 130 to 132 contribute to the NAD(+) site; that span reads VGN. 2 residues coordinate substrate: Asn132 and Arg166. His191 acts as the Proton acceptor in catalysis.

This sequence belongs to the LDH/MDH superfamily. MDH type 2 family.

The enzyme catalyses (S)-malate + NAD(+) = oxaloacetate + NADH + H(+). In terms of biological role, catalyzes the reversible oxidation of malate to oxaloacetate. This is Malate dehydrogenase 2 from Albidiferax ferrireducens (strain ATCC BAA-621 / DSM 15236 / T118) (Rhodoferax ferrireducens).